Reading from the N-terminus, the 378-residue chain is P2X receptor A (378 aa).

Residues 1–27 (MGFSFDWDDIFQYSTVKIVRIRDRRLG) are Cytoplasmic-facing. The chain crosses the membrane as a helical span at residues 28-48 (ILHLSFLVGIVAYIVVYSAII). Residues 49–307 (KKGYLFTEVP…IQTGTIGSFH (259 aa)) are Lumenal-facing. The tract at residues 290-303 (RHGIRVIFIQTGTI) is pore-forming motif. The chain crosses the membrane as a helical span at residues 308 to 328 (FQTLLLTLVSGLGLLAVATTV). The Cytoplasmic portion of the chain corresponds to 329–378 (VDQLAIRLLPQRKSYSSLKFQVTESMSNPMKKRITTDEGEDVLYTRIEGL).

It belongs to the P2X receptor family.

Its subcellular location is the contractile vacuole membrane. Functionally, P2X receptors are ATP-gated ion channels that play a role in intracellular calcium signaling. Not required for the purinergic response to extracellular nucleotides. Inward currents evoked by intracellular ATP and ATP analogs. Exclusively selective for ATP over other nucleotides. Insensitive to P2 receptor antagonists PPADS, suramin and 2',3'-O-(2,4,6-trinitrophenyl)-ATP but inhibited by nanomolar concentrations of copper and sodium ion. More permeable to ammonium than either sodium or potassium ions and less permeable to choline. It has been reported that p2xA is not essential for osmoregulation, however this information is in contradiction with another source which indicates that p2xA is required for osmoregulation. Found to be permeable to chloride ions. Inhibited by copper and sodium ions. This chain is P2X receptor A (p2xA), found in Dictyostelium discoideum (Social amoeba).